The chain runs to 620 residues: MAU2 chromatid cohesion factor homolog (620 aa).

3 TPR repeats span residues 90 to 123 (FDTASLLAQLYQQQEQSSLAKPVLRKAIELSQHN), 445 to 478 (GSFYYVQGLNAFHKSSFHEAKRFLRETLKMANAE), and 485 to 518 (SCSLVLLSHVFLSIGNSKESMNMVTPAMQLASKI).

It belongs to the SCC4/mau-2 family. As to quaternary structure, component of the cohesin loading complex.

The protein localises to the nucleus. It localises to the nucleoplasm. Functionally, required for association of the cohesin complex with chromatin during interphase. Plays a role in sister chromatid cohesion and normal progression through prometaphase. The protein is MAU2 chromatid cohesion factor homolog of Aedes aegypti (Yellowfever mosquito).